Reading from the N-terminus, the 295-residue chain is Ribosome production factor 1 (295 aa).

The interval 24–47 (HEKNKERHTMRRKRAKEERENPEL) is disordered. Positions 38-47 (AKEERENPEL) are enriched in basic and acidic residues. The Brix domain occupies 93 to 276 (PKIFLTTNVN…LKRLQRGIKE (184 aa)). The RNA-binding stretch occupies residues 254 to 271 (VGLQELGPQFTLKLKRLQ).

Part of a complex that includes BRX1, RPF1, RPF2 and SSF1 or SSF2.

The protein localises to the nucleus. It localises to the nucleolus. In terms of biological role, essential protein. Required for biogenesis of the 60S ribosomal subunit. This is Ribosome production factor 1 (RPF1) from Saccharomyces cerevisiae (strain ATCC 204508 / S288c) (Baker's yeast).